The chain runs to 519 residues: Aldehyde dehydrogenase X, mitochondrial (519 aa).

The transit peptide at 1–19 directs the protein to the mitochondrion; it reads MLNARFLVPRLLCLQGRTT. Residue Lys53 is modified to N6-acetyllysine. The residue at position 54 (Lys54) is an N6-acetyllysine; alternate. N6-succinyllysine; alternate is present on Lys54. 264–269 is an NAD(+) binding site; the sequence is GSTEVG. Catalysis depends on Glu287, which acts as the Proton acceptor. The active-site Nucleophile is Cys321. N6-acetyllysine; alternate is present on residues Lys366, Lys385, Lys401, and Lys428. N6-succinyllysine; alternate occurs at positions 366, 385, 401, and 428. Lys431 carries the post-translational modification N6-acetyllysine.

It belongs to the aldehyde dehydrogenase family. In terms of assembly, homotetramer.

The protein resides in the mitochondrion matrix. It catalyses the reaction an aldehyde + NAD(+) + H2O = a carboxylate + NADH + 2 H(+). It functions in the pathway alcohol metabolism; ethanol degradation; acetate from ethanol: step 2/2. In terms of biological role, ALDHs play a major role in the detoxification of alcohol-derived acetaldehyde. They are involved in the metabolism of corticosteroids, biogenic amines, neurotransmitters, and lipid peroxidation. In Rattus norvegicus (Rat), this protein is Aldehyde dehydrogenase X, mitochondrial (Aldh1b1).